The chain runs to 151 residues: MTGKYMPRTVILGVIGSDAHVVGITILEQALSAAGFEVINLGVQTAQDEFVSAAKSHDAEAVLVSSLYGHARQDCEGLHDELDDAGLDVLTYVGGNLAVGQSDFEETQATFRQMGFDRVFDAETDPEEAIEMLREDLQLTTTEAEQIRVDG.

Residues 7-140 enclose the B12-binding domain; the sequence is PRTVILGVIG…EMLREDLQLT (134 aa). Adenosylcob(III)alamin-binding positions include 17-21, His20, 65-67, and 96-100; these read SDAHV, SSL, and NLAVG.

The protein belongs to the methylaspartate mutase GlmS subunit family. In terms of assembly, heterotetramer composed of 2 epsilon subunits (GlmE) and 2 sigma subunits (GlmS). GlmE exists as a homodimer and GlmS as a monomer. Requires adenosylcob(III)alamin as cofactor.

The catalysed reaction is (2S,3S)-3-methyl-L-aspartate = L-glutamate. It functions in the pathway amino-acid degradation; L-glutamate degradation via mesaconate pathway; acetate and pyruvate from L-glutamate: step 1/4. In terms of biological role, catalyzes the carbon skeleton rearrangement of L-glutamate to L-threo-3-methylaspartate ((2S,3S)-3-methylaspartate). The chain is Glutamate mutase sigma subunit 1 from Haloarcula marismortui (strain ATCC 43049 / DSM 3752 / JCM 8966 / VKM B-1809) (Halobacterium marismortui).